Consider the following 186-residue polypeptide: uncharacterized protein (186 aa).

A disordered region spans residues 156-186; the sequence is DTKELERTTQPPEHQKHHQEPREKRGMNKRD. Basic and acidic residues predominate over residues 173–186; that stretch reads HQEPREKRGMNKRD.

This is an uncharacterized protein from Bacillus subtilis (strain 168).